The chain runs to 366 residues: MSHNTFGHLFRVTTWGESHGEALGCVIDGCPPGITFTLSDIQSYLNKRKPGQSKYTTQRRELDQVEILSGVIVQDDGITFVTTGTPISLLIRNMDQRSKDYSAIVHQYRPGHADYTYDVKYGIRDFRGGGRASARETAARVAAGAVARKIIPGVIVRGAVIAIGPHTINRNRWNWSEVDNNPFFTPDAEMVQVFSDYIDKVHKNGSSVGAVVEIVAENIPAGLGAPIYAKLDQDIASLLMSINAVKGVEIGDGFAAARLTGEENADEMRMGSDGKPLFLSNHAGGIVGGISSGQPIIARFAVKPTSSILIPRRSIDVDGNDVNVITKGRHDPCVGIRAVPVGEAMVACALADHYLRHRGQVGCFKR.

Arg-48 is a binding site for NADP(+). FMN contacts are provided by residues Arg-131–Ser-133, Asn-243–Ala-244, Gly-288, Lys-303–Ser-307, and Arg-329.

Belongs to the chorismate synthase family. As to quaternary structure, homotetramer. FMNH2 serves as cofactor.

The enzyme catalyses 5-O-(1-carboxyvinyl)-3-phosphoshikimate = chorismate + phosphate. It participates in metabolic intermediate biosynthesis; chorismate biosynthesis; chorismate from D-erythrose 4-phosphate and phosphoenolpyruvate: step 7/7. Catalyzes the anti-1,4-elimination of the C-3 phosphate and the C-6 proR hydrogen from 5-enolpyruvylshikimate-3-phosphate (EPSP) to yield chorismate, which is the branch point compound that serves as the starting substrate for the three terminal pathways of aromatic amino acid biosynthesis. This reaction introduces a second double bond into the aromatic ring system. The protein is Chorismate synthase of Bartonella henselae (strain ATCC 49882 / DSM 28221 / CCUG 30454 / Houston 1) (Rochalimaea henselae).